Reading from the N-terminus, the 426-residue chain is 3-phosphoshikimate 1-carboxyvinyltransferase (426 aa).

Residues lysine 22, serine 23, and arginine 27 each contribute to the 3-phosphoshikimate site. Position 22 (lysine 22) interacts with phosphoenolpyruvate. Residues glycine 96 and arginine 124 each contribute to the phosphoenolpyruvate site. The 3-phosphoshikimate site is built by serine 170, serine 171, glutamine 172, serine 198, aspartate 314, asparagine 337, and lysine 341. Phosphoenolpyruvate is bound at residue glutamine 172. Aspartate 314 functions as the Proton acceptor in the catalytic mechanism. Residues arginine 345, arginine 387, and lysine 412 each coordinate phosphoenolpyruvate.

The protein belongs to the EPSP synthase family. In terms of assembly, monomer.

It is found in the cytoplasm. The enzyme catalyses 3-phosphoshikimate + phosphoenolpyruvate = 5-O-(1-carboxyvinyl)-3-phosphoshikimate + phosphate. The protein operates within metabolic intermediate biosynthesis; chorismate biosynthesis; chorismate from D-erythrose 4-phosphate and phosphoenolpyruvate: step 6/7. Functionally, catalyzes the transfer of the enolpyruvyl moiety of phosphoenolpyruvate (PEP) to the 5-hydroxyl of shikimate-3-phosphate (S3P) to produce enolpyruvyl shikimate-3-phosphate and inorganic phosphate. The chain is 3-phosphoshikimate 1-carboxyvinyltransferase from Shewanella loihica (strain ATCC BAA-1088 / PV-4).